The primary structure comprises 43 residues: Potassium channel toxin gamma-KTx 4.5 (43 aa).

Intrachain disulfides connect cysteine 5-cysteine 23, cysteine 11-cysteine 34, cysteine 20-cysteine 39, and cysteine 24-cysteine 41.

Belongs to the ergtoxin family. Gamma-KTx 4 subfamily. Expressed by the venom gland.

It localises to the secreted. Reversibly blocks Kv11/ERG potassium channels. The polypeptide is Potassium channel toxin gamma-KTx 4.5 (Centruroides exilicauda (Bark scorpion)).